The following is a 191-amino-acid chain: Small ribosomal subunit protein uS7 (191 aa).

The interval 56-80 is disordered; it reads NKSGEQGDGDGESGGKAGGIKKRSL.

It belongs to the universal ribosomal protein uS7 family. In terms of assembly, part of the 30S ribosomal subunit. Contacts proteins S9 and S11.

In terms of biological role, one of the primary rRNA binding proteins, it binds directly to 16S rRNA where it nucleates assembly of the head domain of the 30S subunit. Is located at the subunit interface close to the decoding center, probably blocks exit of the E-site tRNA. In Coxiella burnetii (strain RSA 493 / Nine Mile phase I), this protein is Small ribosomal subunit protein uS7.